A 274-amino-acid polypeptide reads, in one-letter code: Large ribosomal subunit protein uL2 (274 aa).

The tract at residues 223–258 is disordered; it reads VAMNPVDHPHGGGEGRTSGGRHPVTPWGIPTKGYKT.

This sequence belongs to the universal ribosomal protein uL2 family. Part of the 50S ribosomal subunit. Forms a bridge to the 30S subunit in the 70S ribosome.

One of the primary rRNA binding proteins. Required for association of the 30S and 50S subunits to form the 70S ribosome, for tRNA binding and peptide bond formation. It has been suggested to have peptidyltransferase activity; this is somewhat controversial. Makes several contacts with the 16S rRNA in the 70S ribosome. This is Large ribosomal subunit protein uL2 from Geotalea daltonii (strain DSM 22248 / JCM 15807 / FRC-32) (Geobacter daltonii).